A 369-amino-acid polypeptide reads, in one-letter code: Probable serine/threonine-protein kinase DDB_G0291350 (369 aa).

The 346-residue stretch at 22–367 (YTVNRILGEG…QVIERINQII (346 aa)) folds into the Protein kinase domain. ATP contacts are provided by residues 28–36 (LGEGGFSFV) and Lys-51. The active-site Proton acceptor is Asp-159. The tract at residues 169 to 225 (NLRRPSNNNNNNNNNNNNNNNNNNNNNNNNNNNNNNNNNNNNNNNNNNNNNNNSEDS) is disordered. The segment covering 175–221 (NNNNNNNNNNNNNNNNNNNNNNNNNNNNNNNNNNNNNNNNNNNNNNN) has biased composition (low complexity).

This sequence belongs to the protein kinase superfamily. Ser/Thr protein kinase family.

It carries out the reaction L-seryl-[protein] + ATP = O-phospho-L-seryl-[protein] + ADP + H(+). It catalyses the reaction L-threonyl-[protein] + ATP = O-phospho-L-threonyl-[protein] + ADP + H(+). The polypeptide is Probable serine/threonine-protein kinase DDB_G0291350 (Dictyostelium discoideum (Social amoeba)).